Consider the following 945-residue polypeptide: Isoleucine--tRNA ligase (945 aa).

The 'HIGH' region signature appears at proline 66 to histidine 76. Glutamate 581 lines the L-isoleucyl-5'-AMP pocket. The short motif at lysine 622 to serine 626 is the 'KMSKS' region element. Lysine 625 contacts ATP. Zn(2+)-binding residues include cysteine 908, cysteine 911, cysteine 928, and cysteine 931.

It belongs to the class-I aminoacyl-tRNA synthetase family. IleS type 1 subfamily. Monomer. The cofactor is Zn(2+).

The protein resides in the cytoplasm. It catalyses the reaction tRNA(Ile) + L-isoleucine + ATP = L-isoleucyl-tRNA(Ile) + AMP + diphosphate. In terms of biological role, catalyzes the attachment of isoleucine to tRNA(Ile). As IleRS can inadvertently accommodate and process structurally similar amino acids such as valine, to avoid such errors it has two additional distinct tRNA(Ile)-dependent editing activities. One activity is designated as 'pretransfer' editing and involves the hydrolysis of activated Val-AMP. The other activity is designated 'posttransfer' editing and involves deacylation of mischarged Val-tRNA(Ile). The polypeptide is Isoleucine--tRNA ligase (Burkholderia vietnamiensis (strain G4 / LMG 22486) (Burkholderia cepacia (strain R1808))).